A 506-amino-acid polypeptide reads, in one-letter code: Alpha-L-arabinofuranosidase B (506 aa).

Residues 1–26 (MSSGLSLERACAVALGIVASASLVAA) form the signal peptide. The catalytic stretch occupies residues 27–343 (GPCDIYSSGG…ADIVAAKYAI (317 aa)). 3 disulfides stabilise this stretch: C29-C39, C89-C94, and C184-C185. An N-linked (GlcNAc...) asparagine glycan is attached at N91. Residue D227 coordinates substrate. E229 functions as the Nucleophile in the catalytic mechanism. Substrate is bound by residues N230 and G304. D305 acts as the Proton donor in catalysis. Residues 344-506 (ASLTSGPALT…VSWVVSTGFA (163 aa)) form an ABD region. Cysteines 409 and 447 form a disulfide. The substrate site is built by H424, N426, F427, D443, H471, E473, L476, and D496.

This sequence belongs to the glycosyl hydrolase 54 family.

It is found in the secreted. It carries out the reaction Hydrolysis of terminal non-reducing alpha-L-arabinofuranoside residues in alpha-L-arabinosides.. It participates in glycan metabolism; L-arabinan degradation. In terms of biological role, alpha-L-arabinofuranosidase involved in the degradation of arabinoxylan, a major component of plant hemicellulose. Able to hydrolyze 1,5-, 1,3- and 1,2-alpha-linkages not only in L-arabinofuranosyl oligosaccharides, but also in polysaccharides containing terminal non-reducing L-arabinofuranoses in side chains, like L-arabinan, arabinogalactan and arabinoxylan. This is Alpha-L-arabinofuranosidase B (abfB) from Aspergillus oryzae (strain ATCC 42149 / RIB 40) (Yellow koji mold).